The following is a 403-amino-acid chain: Imidazolonepropionase (403 aa).

H69 and H71 together coordinate Fe(3+). 2 residues coordinate Zn(2+): H69 and H71. Residues R78, Y141, and H174 each contribute to the 4-imidazolone-5-propanoate site. N-formimidoyl-L-glutamate is bound at residue Y141. H239 provides a ligand contact to Fe(3+). H239 lines the Zn(2+) pocket. 4-imidazolone-5-propanoate is bound at residue Q242. Residue D314 coordinates Fe(3+). D314 contributes to the Zn(2+) binding site. Positions 316 and 318 each coordinate N-formimidoyl-L-glutamate. S319 lines the 4-imidazolone-5-propanoate pocket.

The protein belongs to the metallo-dependent hydrolases superfamily. HutI family. It depends on Zn(2+) as a cofactor. Fe(3+) is required as a cofactor.

The protein resides in the cytoplasm. The catalysed reaction is 4-imidazolone-5-propanoate + H2O = N-formimidoyl-L-glutamate. It participates in amino-acid degradation; L-histidine degradation into L-glutamate; N-formimidoyl-L-glutamate from L-histidine: step 3/3. Functionally, catalyzes the hydrolytic cleavage of the carbon-nitrogen bond in imidazolone-5-propanoate to yield N-formimidoyl-L-glutamate. It is the third step in the universal histidine degradation pathway. This Legionella pneumophila (strain Lens) protein is Imidazolonepropionase.